A 223-amino-acid polypeptide reads, in one-letter code: GTP-binding nuclear protein Ran (223 aa).

A Small GTPase Ran-type domain is found at 8–172 (VVAEFKLVLV…LWILRKLTGD (165 aa)). 19–26 (DGGVGKTT) contributes to the GTP binding site. A switch-I region spans residues 38-46 (KRYIATQGV). GTP is bound by residues glycine 69, 123–126 (NKVD), and 151–153 (SAK). Residues 69-85 (GQEKLGGLREGYYIGAD) are switch-II.

This sequence belongs to the small GTPase superfamily. Ran family. As to quaternary structure, monomer. Found in a nuclear export complex with RanGTP, exportin and pre-miRNA.

The protein resides in the nucleus. Functionally, GTP-binding protein involved in nucleocytoplasmic transport. Required for the import of protein into the nucleus and also for RNA export. Involved in chromatin condensation and control of cell cycle. In Tetrahymena pyriformis, this protein is GTP-binding nuclear protein Ran.